A 603-amino-acid chain; its full sequence is Cell division control protein 48 homolog B (603 aa).

Residues 63–70 (GPPGTGKT) and 327–334 (GPPGCSKT) contribute to the ATP site.

This sequence belongs to the AAA ATPase family.

It is found in the nucleus. The protein resides in the cytoplasm. The protein localises to the cytoskeleton. It localises to the phragmoplast. Its function is as follows. Probably functions in cell division and growth processes. Interacts with certain SNAREs as part of specialized membrane fusion events where vesicles from the same organelle fuse (homotypic fusion). In Arabidopsis thaliana (Mouse-ear cress), this protein is Cell division control protein 48 homolog B (CDC48B).